The primary structure comprises 593 residues: NADH-quinone oxidoreductase subunit C/D (593 aa).

Positions 1–184 are NADH dehydrogenase I subunit C; that stretch reads MTADNALYIP…DPYSLTLAKQ (184 aa). Positions 208-593 are NADH dehydrogenase I subunit D; that stretch reads DYMFLNLGPN…IDFVMADVDR (386 aa).

This sequence in the N-terminal section; belongs to the complex I 30 kDa subunit family. The protein in the C-terminal section; belongs to the complex I 49 kDa subunit family. NDH-1 is composed of 13 different subunits. Subunits NuoB, CD, E, F, and G constitute the peripheral sector of the complex.

It localises to the cell inner membrane. It catalyses the reaction a quinone + NADH + 5 H(+)(in) = a quinol + NAD(+) + 4 H(+)(out). Its function is as follows. NDH-1 shuttles electrons from NADH, via FMN and iron-sulfur (Fe-S) centers, to quinones in the respiratory chain. The immediate electron acceptor for the enzyme in this species is believed to be ubiquinone. Couples the redox reaction to proton translocation (for every two electrons transferred, four hydrogen ions are translocated across the cytoplasmic membrane), and thus conserves the redox energy in a proton gradient. The polypeptide is NADH-quinone oxidoreductase subunit C/D (Pseudomonas savastanoi pv. phaseolicola (strain 1448A / Race 6) (Pseudomonas syringae pv. phaseolicola (strain 1448A / Race 6))).